We begin with the raw amino-acid sequence, 96 residues long: MSAVTINDDGLVLRLYIQPKASRDSIVGLHGDEVKVAITAPPVDGQANSHLVKFLGKQFRVAKSQVVIEKGELGRHKQIKIINPQQIPPEIAALLN.

This sequence belongs to the UPF0235 family.

The chain is UPF0235 protein YggU from Escherichia coli O127:H6 (strain E2348/69 / EPEC).